A 510-amino-acid chain; its full sequence is GTPase Der (510 aa).

EngA-type G domains lie at 3–166 (PVVA…ATAL) and 220–393 (IKIA…ACAT). GTP is bound by residues 9 to 16 (GRPNVGKS), 56 to 60 (DTGGI), 118 to 121 (NKTD), 226 to 233 (GRPNVGKS), 273 to 277 (DTAGV), and 338 to 341 (NKWD). Positions 394 to 478 (QKTSTSMLTR…PIRIQFQEGN (85 aa)) constitute a KH-like domain.

The protein belongs to the TRAFAC class TrmE-Era-EngA-EngB-Septin-like GTPase superfamily. EngA (Der) GTPase family. Associates with the 50S ribosomal subunit.

Functionally, GTPase that plays an essential role in the late steps of ribosome biogenesis. The sequence is that of GTPase Der from Haemophilus ducreyi (strain 35000HP / ATCC 700724).